The primary structure comprises 883 residues: MLQLWKVVRPARQLELHRLILLLIGFSLVSMGFLAYYVSTSPKAKEPLPLPLGDCSSSGAAGPGPARPPVPPRPQRPPETTRTEPVVLVFVESAYSQLGQEIVAILESSRFRYSTELAPGRGDMPTLTDHTHGRYVLVIYENLLKYVNLDAWSRELLDRYCVEYGVGIIGFFRAREHSLLSAQLKGFPLFLHSNLGLRDYQVNPSAPLLHLTRPSRLEPGPLPGDDWTIFQSNHSTYEPVLIASHRPAELSMPGPVLRRARLPTVVQDLGLHDGIQRVLFGHGLSFWLHKLVFVDAVAYLTGKRLCLDLDRYILVDIDDIFVGKEGTRMKVADVEALLTTQNKLRTLVPNFTFNLGFSGKFYHTGTEEEDAGDDMLLKHRREFWWFPHMWSHMQPHLFHNRSVLADQMRLNKQFALEHGIPTDLGYAVAPHHSGVYPIHSQLYEAWKSVWGIQVTSTEEYPHLRPARYRRGFIHNGIMVLPRQTCGLFTHTIFYNEYPGGSRELDRSIRGGELFLTVLLNPISVFMTHLSNYGNDRLGLYTFESLVRFLQCWTRLRLQTLPPVPLAQKYFELFPQERSPLWQNPCDDKRHKDIWSKEKTCDRLPKFLIVGPQKTGTTAIHFFLSLHPAVTSSFPSPSTFEEIQFFNGPNYHKGIDWYMDFFPVPSNASTDFLFEKSATYFDSEVVPRRGAALLPRAKIITVLINPADRAYSWYQHQRAHGDPIALNYTFYQVISASSQAPLLLRSLQNRCLVPGYYSTHLQRWLTYYPSGQLLIMDGQELRVNPAASMEIIQKFLGITPFLNYTRTLRFDEDKGFWCQGLEGGKTRCLGRSKGRRYPDMDMESRLFLTDFFRNHNLELSKLLSRLGQPAPLWLREELQHSSVG.

The Cytoplasmic portion of the chain corresponds to 1–18 (MLQLWKVVRPARQLELHR). The helical; Signal-anchor for type II membrane protein transmembrane segment at 19 to 39 (LILLLIGFSLVSMGFLAYYVS) threads the bilayer. At 40 to 883 (TSPKAKEPLP…REELQHSSVG (844 aa)) the chain is on the lumenal side. Positions 41 to 597 (SPKAKEPLPL…KRHKDIWSKE (557 aa)) are heparan sulfate N-deacetylase 2. Residues 49-82 (PLPLGDCSSSGAAGPGPARPPVPPRPQRPPETTR) are disordered. Residues 65–77 (PARPPVPPRPQRP) are compositionally biased toward pro residues. 3 N-linked (GlcNAc...) asparagine glycosylation sites follow: Asn-233, Asn-350, and Asn-400. The tract at residues 598-883 (KTCDRLPKFL…REELQHSSVG (286 aa)) is heparan sulfate N-sulfotransferase 2. Catalysis depends on Lys-613, which acts as the For sulfotransferase activity. Position 613-617 (613-617 (KTGTT)) interacts with 3'-phosphoadenylyl sulfate. An N-linked (GlcNAc...) asparagine glycan is attached at Asn-666. Ser-711 lines the 3'-phosphoadenylyl sulfate pocket. N-linked (GlcNAc...) asparagine glycans are attached at residues Asn-726 and Asn-802. Cys-817 and Cys-827 are oxidised to a cystine. Residue 832-836 (KGRRY) coordinates 3'-phosphoadenylyl sulfate.

It belongs to the sulfotransferase 1 family. NDST subfamily. As to quaternary structure, monomer. As to expression, widely expressed in adult and throughout development.

It localises to the golgi apparatus membrane. It catalyses the reaction alpha-D-glucosaminyl-[heparan sulfate](n) + 3'-phosphoadenylyl sulfate = N-sulfo-alpha-D-glucosaminyl-[heparan sulfate](n) + adenosine 3',5'-bisphosphate + 2 H(+). The protein operates within glycan metabolism; heparan sulfate biosynthesis. It participates in glycan metabolism; heparin biosynthesis. Functionally, essential bifunctional enzyme that catalyzes both the N-deacetylation and the N-sulfation of glucosamine (GlcNAc) of the glycosaminoglycan in heparan sulfate. Modifies the GlcNAc-GlcA disaccharide repeating sugar backbone to make N-sulfated heparosan, a prerequisite substrate for later modifications in heparin biosynthesis. Plays a role in determining the extent and pattern of sulfation of heparan sulfate. Required for the exosomal release of SDCBP, CD63 and syndecan. The sequence is that of Bifunctional heparan sulfate N-deacetylase/N-sulfotransferase 2 (Ndst2) from Mus musculus (Mouse).